Here is a 1670-residue protein sequence, read N- to C-terminus: DNA-directed RNA polymerase I subunit 1 (1670 aa).

The Zn(2+) site is built by Cys79, Cys82, Cys89, His92, Cys119, and Cys122. The tract at residues 154–185 (ESNTPTKSKSSDESCESVVTTDSSEECEDSDV) is disordered. A compositionally biased stretch (acidic residues) spans 176–185 (SSEECEDSDV). Cys213 and Cys216 together coordinate Zn(2+). Positions 255 to 293 (TSSVENPDGFDDSGIDALSEVEDGDKETREKSTEVAAEF) are disordered. Acidic residues predominate over residues 262-279 (DGFDDSGIDALSEVEDGD). Basic and acidic residues predominate over residues 280–293 (KETREKSTEVAAEF). Residues Asp602, Asp604, and Asp606 each coordinate Mg(2+). The bridging helix stretch occupies residues 1005 to 1017 (PQEYYFHCMAGRE). The segment at 1318-1437 (TGPIAGNETD…EQSKKKRRKF (120 aa)) is disordered. Composition is skewed to acidic residues over residues 1339-1354 (DDGD…DDLG), 1366-1379 (DEMD…DETN), and 1388-1399 (EDPEMDSENEDT). The segment covering 1415–1429 (EPQKEVKGVKNVKEQ) has biased composition (basic and acidic residues).

Belongs to the RNA polymerase beta' chain family. As to quaternary structure, component of the RNA polymerase I (Pol I) complex consisting of at least 13 subunits.

The protein resides in the nucleus. It catalyses the reaction RNA(n) + a ribonucleoside 5'-triphosphate = RNA(n+1) + diphosphate. DNA-dependent RNA polymerase catalyzes the transcription of DNA into RNA using the four ribonucleoside triphosphates as substrates. Largest and catalytic core component of RNA polymerase I which synthesizes ribosomal RNA precursors. Forms the polymerase active center together with the second largest subunit. A single stranded DNA template strand of the promoter is positioned within the central active site cleft of Pol I. A bridging helix emanates from NRPA1 and crosses the cleft near the catalytic site and is thought to promote translocation of Pol I by acting as a ratchet that moves the RNA-DNA hybrid through the active site by switching from straight to bent conformations at each step of nucleotide addition. The chain is DNA-directed RNA polymerase I subunit 1 from Arabidopsis thaliana (Mouse-ear cress).